A 532-amino-acid chain; its full sequence is FRIGIDA-like protein 4b (532 aa).

It belongs to the Frigida family. As to expression, expressed in leaves, shoot apex, flowers and during seed development.

The sequence is that of FRIGIDA-like protein 4b (FRL4B) from Arabidopsis thaliana (Mouse-ear cress).